The following is a 237-amino-acid chain: 1-(5-phosphoribosyl)-5-[(5-phosphoribosylamino)methylideneamino] imidazole-4-carboxamide isomerase (237 aa).

The active-site Proton acceptor is Asp8. Asp127 acts as the Proton donor in catalysis.

The protein belongs to the HisA/HisF family.

Its subcellular location is the cytoplasm. It catalyses the reaction 1-(5-phospho-beta-D-ribosyl)-5-[(5-phospho-beta-D-ribosylamino)methylideneamino]imidazole-4-carboxamide = 5-[(5-phospho-1-deoxy-D-ribulos-1-ylimino)methylamino]-1-(5-phospho-beta-D-ribosyl)imidazole-4-carboxamide. Its pathway is amino-acid biosynthesis; L-histidine biosynthesis; L-histidine from 5-phospho-alpha-D-ribose 1-diphosphate: step 4/9. This chain is 1-(5-phosphoribosyl)-5-[(5-phosphoribosylamino)methylideneamino] imidazole-4-carboxamide isomerase, found in Sulfurovum sp. (strain NBC37-1).